The primary structure comprises 194 residues: Putative 3-methyladenine DNA glycosylase (194 aa).

Belongs to the DNA glycosylase MPG family.

This chain is Putative 3-methyladenine DNA glycosylase, found in Anaeromyxobacter sp. (strain Fw109-5).